Consider the following 119-residue polypeptide: Immunoglobulin heavy variable 3-73 (119 aa).

The first 19 residues, 1-19, serve as a signal peptide directing secretion; the sequence is MEFGLSWVFLVAILKGVQC. The tract at residues 20–44 is framework-1; that stretch reads EVQLVESGGGLVQPGGSLKLSCAAS. An Ig-like domain is found at 20–119; sequence EVQLVESGGG…EDTAVYYCTR (100 aa). A disulfide bond links Cys-41 and Cys-117. Positions 45–52 are complementarity-determining-1; it reads GFTFSGSA. Residues 53-69 are framework-2; sequence MHWVRQASGKGLEWVGR. Residues 70–79 form a complementarity-determining-2 region; the sequence is IRSKANSYAT. Residues 80–117 form a framework-3 region; sequence AYAASVKGRFTISRDDSKNTAYLQMNSLKTEDTAVYYC. The tract at residues 118–119 is complementarity-determining-3; sequence TR.

Immunoglobulins are composed of two identical heavy chains and two identical light chains; disulfide-linked.

The protein localises to the secreted. Its subcellular location is the cell membrane. V region of the variable domain of immunoglobulin heavy chains that participates in the antigen recognition. Immunoglobulins, also known as antibodies, are membrane-bound or secreted glycoproteins produced by B lymphocytes. In the recognition phase of humoral immunity, the membrane-bound immunoglobulins serve as receptors which, upon binding of a specific antigen, trigger the clonal expansion and differentiation of B lymphocytes into immunoglobulins-secreting plasma cells. Secreted immunoglobulins mediate the effector phase of humoral immunity, which results in the elimination of bound antigens. The antigen binding site is formed by the variable domain of one heavy chain, together with that of its associated light chain. Thus, each immunoglobulin has two antigen binding sites with remarkable affinity for a particular antigen. The variable domains are assembled by a process called V-(D)-J rearrangement and can then be subjected to somatic hypermutations which, after exposure to antigen and selection, allow affinity maturation for a particular antigen. This is Immunoglobulin heavy variable 3-73 from Homo sapiens (Human).